We begin with the raw amino-acid sequence, 394 residues long: UDP-glucose 6-dehydrogenase (394 aa).

Residues 2–19, Val-11, Asp-29, Lys-34, Thr-83, Thr-118, and Glu-145 each bind NAD(+); that span reads KIAIAGSGYVGLSLAVLL. Substrate is bound by residues 141–145, Lys-203, Asn-207, 248–252, and Gly-256; these read EFLRE and YNNPS. Residue Tyr-258 coordinates NAD(+). Catalysis depends on Cys-259, which acts as the Nucleophile. Lys-262 contacts NAD(+). Lys-313 provides a ligand contact to substrate. Residue Arg-320 participates in NAD(+) binding.

Belongs to the UDP-glucose/GDP-mannose dehydrogenase family.

The enzyme catalyses UDP-alpha-D-glucose + 2 NAD(+) + H2O = UDP-alpha-D-glucuronate + 2 NADH + 3 H(+). The protein operates within nucleotide-sugar biosynthesis; UDP-alpha-D-glucuronate biosynthesis; UDP-alpha-D-glucuronate from UDP-alpha-D-glucose: step 1/1. In terms of biological role, catalyzes the formation of UDP-glucuronic acid which is required for capsular hyaluronic acid synthesis. Directly responsible for the transformation of some unencapsulated serotype-3 SP mutants to the encapsulated phenotype. This is UDP-glucose 6-dehydrogenase (cap3A) from Streptococcus pneumoniae.